We begin with the raw amino-acid sequence, 279 residues long: Energy-coupling factor transporter ATP-binding protein EcfA (279 aa).

Positions 5 to 240 (IELEKINYKY…GPELIDLGLD (236 aa)) constitute an ABC transporter domain. 40–47 (GHNGSGKS) contributes to the ATP binding site.

It belongs to the ABC transporter superfamily. Energy-coupling factor EcfA family. As to quaternary structure, forms a stable energy-coupling factor (ECF) transporter complex composed of 2 membrane-embedded substrate-binding proteins (S component), 2 ATP-binding proteins (A component) and 2 transmembrane proteins (T component).

It is found in the cell membrane. Its function is as follows. ATP-binding (A) component of a common energy-coupling factor (ECF) ABC-transporter complex. Unlike classic ABC transporters this ECF transporter provides the energy necessary to transport a number of different substrates. The sequence is that of Energy-coupling factor transporter ATP-binding protein EcfA from Enterococcus faecium (Streptococcus faecium).